The sequence spans 83 residues: Urotensin-2 (83 aa).

The propeptide occupies Glu-49–Phe-71. A disulfide bridge connects residues Cys-77 and Cys-82.

This sequence belongs to the urotensin-2 family.

The protein resides in the secreted. Its function is as follows. Urotensin is found in the teleost caudal neurosecretory system. It has a suggested role in osmoregulation and as a corticotropin-releasing factor. The non-hormonal portion of this precursor may be a urotensin binding protein, urophysin. The protein is Urotensin-2 of Platichthys flesus (European flounder).